Reading from the N-terminus, the 283-residue chain is tRNA-cytidine(32) 2-sulfurtransferase (283 aa).

Positions 32–37 (SGGKDS) match the PP-loop motif motif. Positions 107, 110, and 198 each coordinate [4Fe-4S] cluster.

It belongs to the TtcA family. In terms of assembly, homodimer. Requires Mg(2+) as cofactor. The cofactor is [4Fe-4S] cluster.

Its subcellular location is the cytoplasm. The catalysed reaction is cytidine(32) in tRNA + S-sulfanyl-L-cysteinyl-[cysteine desulfurase] + AH2 + ATP = 2-thiocytidine(32) in tRNA + L-cysteinyl-[cysteine desulfurase] + A + AMP + diphosphate + H(+). It functions in the pathway tRNA modification. Its function is as follows. Catalyzes the ATP-dependent 2-thiolation of cytidine in position 32 of tRNA, to form 2-thiocytidine (s(2)C32). The sulfur atoms are provided by the cysteine/cysteine desulfurase (IscS) system. The protein is tRNA-cytidine(32) 2-sulfurtransferase of Sorangium cellulosum (strain So ce56) (Polyangium cellulosum (strain So ce56)).